Here is a 39-residue protein sequence, read N- to C-terminus: Photosystem II reaction center protein L (39 aa).

Residues 18–38 (SLYLGLLLVAVLGILFSSYFF) form a helical membrane-spanning segment.

It belongs to the PsbL family. In terms of assembly, PSII is composed of 1 copy each of membrane proteins PsbA, PsbB, PsbC, PsbD, PsbE, PsbF, PsbH, PsbI, PsbJ, PsbK, PsbL, PsbM, PsbT, PsbX, PsbY, PsbZ, Psb30/Ycf12, peripheral proteins PsbO, CyanoQ (PsbQ), PsbU, PsbV and a large number of cofactors. It forms dimeric complexes.

Its subcellular location is the cellular thylakoid membrane. One of the components of the core complex of photosystem II (PSII). PSII is a light-driven water:plastoquinone oxidoreductase that uses light energy to abstract electrons from H(2)O, generating O(2) and a proton gradient subsequently used for ATP formation. It consists of a core antenna complex that captures photons, and an electron transfer chain that converts photonic excitation into a charge separation. This subunit is found at the monomer-monomer interface and is required for correct PSII assembly and/or dimerization. This Microcystis aeruginosa (strain NIES-843 / IAM M-2473) protein is Photosystem II reaction center protein L.